The chain runs to 591 residues: Aspartate--tRNA(Asp/Asn) ligase (591 aa).

Position 175 (Glu175) interacts with L-aspartate. Residues 199 to 202 (QQFK) form an aspartate region. Positions 221 and 453 each coordinate L-aspartate. Residue 221–223 (RDE) participates in ATP binding. ATP is bound at residue Glu486. Arg493 is an L-aspartate binding site. 538-541 (GIDR) is a binding site for ATP.

It belongs to the class-II aminoacyl-tRNA synthetase family. Type 1 subfamily. Homodimer.

The protein localises to the cytoplasm. It catalyses the reaction tRNA(Asx) + L-aspartate + ATP = L-aspartyl-tRNA(Asx) + AMP + diphosphate. In terms of biological role, aspartyl-tRNA synthetase with relaxed tRNA specificity since it is able to aspartylate not only its cognate tRNA(Asp) but also tRNA(Asn). Reaction proceeds in two steps: L-aspartate is first activated by ATP to form Asp-AMP and then transferred to the acceptor end of tRNA(Asp/Asn). This chain is Aspartate--tRNA(Asp/Asn) ligase, found in Roseobacter denitrificans (strain ATCC 33942 / OCh 114) (Erythrobacter sp. (strain OCh 114)).